Consider the following 810-residue polypeptide: Plasminogen (810 aa).

The first 19 residues, 1–19, serve as a signal peptide directing secretion; the sequence is MEHKEVVLLLLLFLKSGQG. The PAN domain maps to 20 to 98; it reads EPLDDYVNTQ…RDVVLFEKKV (79 aa). Cystine bridges form between C49–C73, C53–C61, C103–C181, C124–C164, C152–C176, C185–C262, C188–C316, C206–C245, C234–C257, C275–C352, C296–C335, and C324–C347. Kringle domains are found at residues 103-181, 184-262, and 275-352; these read CKTG…IPEC, ACMH…IPRC, and CLKG…IPSC. The disordered stretch occupies residues 126 to 145; it reads KWSSTSPHRPRFSPATHPSE. Residues R136, D158, and R172 each contribute to the L-lysine site. The O-linked (GalNAc...) threonine glycan is linked to T365. Intrachain disulfides connect C377–C454, C398–C437, C426–C449, C481–C560, C502–C543, C531–C555, C567–C685, C577–C585, and C607–C623. Kringle domains are found at residues 377–454 and 481–560; these read CYHG…LKKC and CMFG…VPQC. D432 and R445 together coordinate L-lysine. Residues 581–808 enclose the Peptidase S1 domain; it reads VVGGCVANAH…FVTWIEGVMR (228 aa). At S597 the chain carries Phosphoserine. Catalysis depends on charge relay system residues H622 and D665. S688 carries the phosphoserine modification. Disulfide bonds link C699–C766, C729–C745, and C756–C784. S760 functions as the Charge relay system in the catalytic mechanism.

The protein belongs to the peptidase S1 family. Plasminogen subfamily. As to quaternary structure, interacts with CSPG4 and AMOT. Interacts (via the Kringle domains) with HRG; the interaction tethers PLG to the cell surface and enhances its activation. Interacts (via Kringle 4 domain) with ADA; the interaction stimulates PLG activation when in complex with DPP4. Angiostatin: Interacts with ATP5F1A; the interaction inhibits most of the angiogenic effects of angiostatin. In the presence of the inhibitor, the activation involves only cleavage after Arg-580, yielding two chains held together by two disulfide bonds. In the absence of the inhibitor, the activation involves additionally the removal of the activation peptide.

The protein resides in the secreted. The enzyme catalyses Preferential cleavage: Lys-|-Xaa &gt; Arg-|-Xaa, higher selectivity than trypsin. Converts fibrin into soluble products.. With respect to regulation, converted into plasmin by plasminogen activators, both plasminogen and its activator being bound to fibrin. Activated with catalytic amounts of streptokinase. In terms of biological role, plasmin dissolves the fibrin of blood clots and acts as a proteolytic factor in a variety of other processes including embryonic development, tissue remodeling, tumor invasion, and inflammation. In ovulation, weakens the walls of the Graafian follicle. It activates the urokinase-type plasminogen activator, collagenases and several complement zymogens, such as C1, C4 and C5. Cleavage of fibronectin and laminin leads to cell detachment and apoptosis. Also cleaves fibrin, thrombospondin and von Willebrand factor. Its role in tissue remodeling and tumor invasion may be modulated by CSPG4. Binds to cells. The sequence is that of Plasminogen (PLG) from Pongo abelii (Sumatran orangutan).